The primary structure comprises 512 residues: NAD(P)H-quinone oxidoreductase chain 4, chloroplastic (512 aa).

The next 14 membrane-spanning stretches (helical) occupy residues 4–24 (VPWL…IPLL), 34–54 (WYAL…FGCY), 87–107 (IGLI…AWPV), 111–131 (PKLF…LFAS), 134–154 (ILLF…LLSM), 167–187 (FILY…TASL), 208–228 (GLEI…LPAF), 242–262 (HYST…YGFI), 274–294 (TVFA…AALV), 308–328 (SSVS…DLGL), 330–350 (GAML…FLAG), 374–396 (MFAM…GFVS), 417–437 (IITL…LSMV), and 462–482 (VFVL…PNFA).

The protein belongs to the complex I subunit 4 family.

Its subcellular location is the plastid. The protein resides in the chloroplast thylakoid membrane. It carries out the reaction a plastoquinone + NADH + (n+1) H(+)(in) = a plastoquinol + NAD(+) + n H(+)(out). It catalyses the reaction a plastoquinone + NADPH + (n+1) H(+)(in) = a plastoquinol + NADP(+) + n H(+)(out). In Zygnema circumcarinatum (Green alga), this protein is NAD(P)H-quinone oxidoreductase chain 4, chloroplastic.